The following is a 363-amino-acid chain: Ribosomal RNA large subunit methyltransferase M (363 aa).

S-adenosyl-L-methionine contacts are provided by residues S187, 220 to 223 (CPGG), D239, D259, and D276. The active-site Proton acceptor is the K305.

This sequence belongs to the class I-like SAM-binding methyltransferase superfamily. RNA methyltransferase RlmE family. RlmM subfamily. In terms of assembly, monomer.

Its subcellular location is the cytoplasm. The catalysed reaction is cytidine(2498) in 23S rRNA + S-adenosyl-L-methionine = 2'-O-methylcytidine(2498) in 23S rRNA + S-adenosyl-L-homocysteine + H(+). In terms of biological role, catalyzes the 2'-O-methylation at nucleotide C2498 in 23S rRNA. In Shewanella loihica (strain ATCC BAA-1088 / PV-4), this protein is Ribosomal RNA large subunit methyltransferase M.